Consider the following 255-residue polypeptide: Thiazole synthase (255 aa).

Lys-95 serves as the catalytic Schiff-base intermediate with DXP. Residues Gly-156, 182 to 183, and 204 to 205 each bind 1-deoxy-D-xylulose 5-phosphate; these read AG and NT.

Belongs to the ThiG family. In terms of assembly, homotetramer. Forms heterodimers with either ThiH or ThiS.

It localises to the cytoplasm. The enzyme catalyses [ThiS sulfur-carrier protein]-C-terminal-Gly-aminoethanethioate + 2-iminoacetate + 1-deoxy-D-xylulose 5-phosphate = [ThiS sulfur-carrier protein]-C-terminal Gly-Gly + 2-[(2R,5Z)-2-carboxy-4-methylthiazol-5(2H)-ylidene]ethyl phosphate + 2 H2O + H(+). It participates in cofactor biosynthesis; thiamine diphosphate biosynthesis. Functionally, catalyzes the rearrangement of 1-deoxy-D-xylulose 5-phosphate (DXP) to produce the thiazole phosphate moiety of thiamine. Sulfur is provided by the thiocarboxylate moiety of the carrier protein ThiS. In vitro, sulfur can be provided by H(2)S. This is Thiazole synthase from Aeromonas salmonicida (strain A449).